A 392-amino-acid polypeptide reads, in one-letter code: DNA replication and repair protein RecF (392 aa).

ATP is bound at residue 33-40 (GANGAGKT).

It belongs to the RecF family.

It is found in the cytoplasm. Functionally, the RecF protein is involved in DNA metabolism; it is required for DNA replication and normal SOS inducibility. RecF binds preferentially to single-stranded, linear DNA. It also seems to bind ATP. The chain is DNA replication and repair protein RecF from Caulobacter sp. (strain K31).